The following is a 143-amino-acid chain: 3-dehydroquinate dehydratase (143 aa).

Residue Tyr-22 is the Proton acceptor of the active site. Residues Asn-73, His-79, and Asp-86 each coordinate substrate. The Proton donor role is filled by His-99. Substrate contacts are provided by residues 100-101 (IS) and Arg-110.

This sequence belongs to the type-II 3-dehydroquinase family. Homododecamer.

It catalyses the reaction 3-dehydroquinate = 3-dehydroshikimate + H2O. It participates in metabolic intermediate biosynthesis; chorismate biosynthesis; chorismate from D-erythrose 4-phosphate and phosphoenolpyruvate: step 3/7. Its function is as follows. Catalyzes a trans-dehydration via an enolate intermediate. In Mycolicibacterium paratuberculosis (strain ATCC BAA-968 / K-10) (Mycobacterium paratuberculosis), this protein is 3-dehydroquinate dehydratase.